The chain runs to 279 residues: HTH-type transcriptional regulator HdfR (279 aa).

The HTH lysR-type domain maps to 1-58 (MDTELLKTFLEVSRTRHFGRAAESLYLTQSAVSFRIRQLENQLGVNLFTRHRNNIRLT). The H-T-H motif DNA-binding region spans 18–37 (FGRAAESLYLTQSAVSFRIR).

It belongs to the LysR transcriptional regulatory family.

Its function is as follows. Negatively regulates the transcription of the flagellar master operon flhDC by binding to the upstream region of the operon. This Escherichia coli O17:K52:H18 (strain UMN026 / ExPEC) protein is HTH-type transcriptional regulator HdfR.